Reading from the N-terminus, the 66-residue chain is Brevinin-1DYb (66 aa).

A signal peptide spans 1 to 22; the sequence is MFTLKKSLLLLFFLGTISLSLC. A propeptide spanning residues 23-44 is cleaved from the precursor; it reads EEERNAEEERRDYPEERDVEVE. Cys60 and Cys66 are oxidised to a cystine.

In terms of tissue distribution, expressed by the skin glands.

The protein localises to the secreted. Its function is as follows. Antimicrobial peptide. Has low activity against the Gram-positive bacterium S.aureus and the Gram-negative bacterium E.coli (MIC&lt;15 uM). Has a strong hemolytic activity. The sequence is that of Brevinin-1DYb from Rana dybowskii (Dybovsky's frog).